The primary structure comprises 62 residues: Ferredoxin-1 (62 aa).

4Fe-4S ferredoxin-type domains follow at residues 3–32 (WTVT…LQDG) and 33–62 (KAVP…VEEN). 2 residues coordinate [3Fe-4S] cluster: cysteine 12 and cysteine 18. Residues cysteine 22, cysteine 42, cysteine 45, and cysteine 48 each contribute to the [4Fe-4S] cluster site. Cysteine 52 is a [3Fe-4S] cluster binding site.

In terms of assembly, homodimer. It depends on [3Fe-4S] cluster as a cofactor. The cofactor is [4Fe-4S] cluster.

Ferredoxins are iron-sulfur proteins that transfer electrons in a wide variety of metabolic reactions. This ferredoxin serves as a carrier for pyruvate dehydrogenase. This is Ferredoxin-1 from Nitratidesulfovibrio vulgaris (strain DSM 19637 / Miyazaki F) (Desulfovibrio vulgaris).